We begin with the raw amino-acid sequence, 142 residues long: Large ribosomal subunit protein uL13 (142 aa).

This sequence belongs to the universal ribosomal protein uL13 family. In terms of assembly, part of the 50S ribosomal subunit.

This protein is one of the early assembly proteins of the 50S ribosomal subunit, although it is not seen to bind rRNA by itself. It is important during the early stages of 50S assembly. The chain is Large ribosomal subunit protein uL13 from Lachnospira eligens (strain ATCC 27750 / DSM 3376 / VPI C15-48 / C15-B4) (Eubacterium eligens).